We begin with the raw amino-acid sequence, 200 residues long: BmK-YA precursor (200 aa).

Residues 1-23 form the signal peptide; sequence MIFHQFYSILILCLIFPNQVVQS. Residues 24–34 constitute a propeptide that is removed on maturation; that stretch reads DKERQDWIPSD. The disordered stretch occupies residues 30–200; it reads WIPSDYGGYM…GYMNPAGRSD (171 aa). The residue at position 42 (Ala-42) is an Alanine amide. The propeptide occupies 45-100; that stretch reads SDEERQDWIPSDYGGHMNPAGRSDEERQDWIPSDYGGHMNPAGRSNEERQDWIPSD. Alanine amide is present on Ala-108. Residues 111–144 constitute a propeptide that is removed on maturation; sequence SDEERQDWIPSDYGGHMNPAGRSNEERQDWIPSD. Ala-152 carries the post-translational modification Alanine amide. Positions 155-188 are excised as a propeptide; that stretch reads SDEERQDWIPSDYGGHMNPAGRSDEERQDWIPSD. Ala-196 carries the alanine amide modification. Positions 199–200 are excised as a propeptide; sequence SD.

As to expression, venom gland.

The protein resides in the secreted. Functionally, synthetic BmK-YA activates human opioid receptors in vitro, with highest activity on the delta-type/OPRD1 receptor (EC(50)=2.5 uM) and lower activity on mu-type/OPRM1 and kappa-type/OPRK1 receptors (EC(50)=17 uM and 30 uM, respectively). The polypeptide is BmK-YA precursor (Olivierus martensii (Manchurian scorpion)).